A 1480-amino-acid chain; its full sequence is C-type mannose receptor 2 (1480 aa).

The first 30 residues, methionine 1–proline 30, serve as a signal peptide directing secretion. The Extracellular portion of the chain corresponds to alanine 31 to alanine 1413. The Ricin B-type lectin domain occupies proline 40–leucine 166. 2 disulfide bridges follow: cysteine 53/cysteine 67 and cysteine 92/cysteine 111. N-linked (GlcNAc...) asparagine glycans are attached at residues asparagine 101 and asparagine 139. Residues serine 181 to isoleucine 229 form the Fibronectin type-II domain. 4 disulfides stabilise this stretch: cysteine 186/cysteine 212, cysteine 200/cysteine 227, cysteine 265/cysteine 358, and cysteine 334/cysteine 350. Positions leucine 243–lysine 359 constitute a C-type lectin 1 domain. N-linked (GlcNAc...) asparagine glycosylation is present at asparagine 363. C-type lectin domains follow at residues phenylalanine 388–lysine 504, histidine 527–cysteine 643, lysine 677–lysine 808, phenylalanine 831–lysine 950, phenylalanine 978–cysteine 1106, tyrosine 1131–cysteine 1242, and phenylalanine 1271–cysteine 1391. 7 cysteine pairs are disulfide-bonded: cysteine 409–cysteine 503, cysteine 480–cysteine 495, cysteine 617–cysteine 634, cysteine 703–cysteine 807, cysteine 784–cysteine 799, cysteine 852–cysteine 949, and cysteine 926–cysteine 941. An N-linked (GlcNAc...) asparagine glycan is attached at asparagine 1028. Cysteine 1077 and cysteine 1097 are oxidised to a cystine. A Glycyl lysine isopeptide (Lys-Gly) (interchain with G-Cter in SUMO1) cross-link involves residue lysine 1141. Cysteines 1219 and 1233 form a disulfide. Asparagine 1348 is a glycosylation site (N-linked (GlcNAc...) asparagine). Residues cysteine 1367 and cysteine 1382 are joined by a disulfide bond. A helical transmembrane segment spans residues leucine 1414 to isoleucine 1434. Residues leucine 1435–glutamate 1480 lie on the Cytoplasmic side of the membrane. The segment at serine 1446–glutamate 1480 is disordered.

As to quaternary structure, interacts directly with PLAUR/UPAR and PLAU/pro-UPA to form a tri-molecular complex. Interacts with collagen V. Interacts with C-terminal region of type I collagen/COL1A1. N-glycosylated. Post-translationally, phosphorylated.

It localises to the cell membrane. In terms of biological role, may play a role as endocytotic lectin receptor displaying calcium-dependent lectin activity. Internalizes glycosylated ligands from the extracellular space for release in an endosomal compartment via clathrin-mediated endocytosis. May be involved in plasminogen activation system controlling the extracellular level of PLAUR/PLAU, and thus may regulate protease activity at the cell surface. May contribute to cellular uptake, remodeling and degradation of extracellular collagen matrices. May participate in remodeling of extracellular matrix cooperating with the matrix metalloproteinases (MMPs) secreted by hepatic stellate cells. May mediate endocytosis of partially degraded collagens and glycoproteins produced in the extracellular matrix by MMPs. The sequence is that of C-type mannose receptor 2 (Mrc2) from Rattus norvegicus (Rat).